Here is a 517-residue protein sequence, read N- to C-terminus: Methionine aminopeptidase 1b (517 aa).

The segment at 74–94 (YCNKENSNNNNNNNNNNNNNL) is disordered. The segment covering 79-94 (NSNNNNNNNNNNNNNL) has biased composition (low complexity). The segment at 114 to 166 (ENLCSGCKKVLIKKLSCPICLKNKIFSYFCNQECFKGSWKEHQKIHENMNKEN) adopts a C6H2-type zinc-finger fold. Positions 117, 120, 130, 133, 143, 147, 155, and 159 each coordinate Zn(2+). His-325 provides a ligand contact to a protein. Residues Asp-342, Asp-353, and His-419 each contribute to the Zn(2+) site. Residue His-426 coordinates a protein. Zn(2+) contacts are provided by Glu-452 and Glu-483.

It belongs to the peptidase M24A family. Methionine aminopeptidase type 1 subfamily. Associates with the 60S ribosomal subunit of the 80S translational complex. Zn(2+) serves as cofactor. The cofactor is Co(2+). It depends on Mn(2+) as a cofactor. Fe(2+) is required as a cofactor.

Its subcellular location is the cytoplasm. The catalysed reaction is Release of N-terminal amino acids, preferentially methionine, from peptides and arylamides.. Its activity is regulated as follows. Inhibited by pyrimidine derivative XC11. Cotranslationally removes the N-terminal methionine from nascent proteins. The N-terminal methionine is often cleaved when the second residue in the primary sequence is small and uncharged (Met-Ala-, Cys, Gly, Pro, Ser, Thr, or Val). May play an important role in parasite growth during the blood asexual stage. The sequence is that of Methionine aminopeptidase 1b from Plasmodium falciparum (isolate 3D7).